Consider the following 223-residue polypeptide: N-terminal Xaa-Pro-Lys N-methyltransferase 1 (223 aa).

Met-1 carries the N-acetylmethionine modification. Thr-2 carries the post-translational modification N-acetylthreonine; in N-terminal Xaa-Pro-Lys N-methyltransferase 1, N-terminally processed. S-adenosyl-L-methionine-binding positions include Gly-69, Arg-74, 91–93 (DVT), 119–120 (LQ), and Gln-135.

Belongs to the methyltransferase superfamily. NTM1 family.

Its subcellular location is the nucleus. The catalysed reaction is N-terminal L-alanyl-L-prolyl-L-lysyl-[protein] + 3 S-adenosyl-L-methionine = N-terminal N,N,N-trimethyl-L-alanyl-L-prolyl-L-lysyl-[protein] + 3 S-adenosyl-L-homocysteine + 3 H(+). The enzyme catalyses N-terminal L-seryl-L-prolyl-L-lysyl-[protein] + 3 S-adenosyl-L-methionine = N-terminal N,N,N-trimethyl-L-seryl-L-prolyl-L-lysyl-[protein] + 3 S-adenosyl-L-homocysteine + 3 H(+). It carries out the reaction N-terminal L-prolyl-L-prolyl-L-lysyl-[protein] + 2 S-adenosyl-L-methionine = N-terminal N,N-dimethyl-L-prolyl-L-prolyl-L-lysyl-[protein] + 2 S-adenosyl-L-homocysteine + 2 H(+). In terms of biological role, distributive alpha-N-methyltransferase that methylates the N-terminus of target proteins containing the N-terminal motif [Ala/Gly/Pro/Ser]-Pro-Lys when the initiator Met is cleaved. Specifically catalyzes mono-, di- or tri-methylation of the exposed alpha-amino group of the Ala, Gly or Ser residue in the [Ala/Gly/Ser]-Pro-Lys motif and mono- or di-methylation of Pro in the Pro-Pro-Lys motif. Some of the substrates may be primed by NTMT2-mediated monomethylation. Catalyzes the trimethylation of the N-terminal Gly in CENPA (after removal of Met-1). Responsible for the N-terminal methylation of KLHL31, MYL2, MYL3, RB1, RCC1, RPL23A and SET. Required during mitosis for normal bipolar spindle formation and chromosome segregation via its action on RCC1. This chain is N-terminal Xaa-Pro-Lys N-methyltransferase 1 (Ntmt1), found in Mus musculus (Mouse).